The following is a 507-amino-acid chain: Nucleoporin p54 (507 aa).

9 consecutive repeat copies span residues 5–6 (FG), 25–26 (FG), 28–29 (FG), 53–54 (FG), 61–62 (FG), 63–64 (FG), 67–68 (FG), 87–88 (FG), and 444–445 (FG). Positions 5 to 445 (FGAPSGTSGT…SQIRMQNHFG (441 aa)) are 9 X 2 AA repeats of F-G.

The protein belongs to the NUP54 family. In terms of assembly, component of the p62 complex, a complex composed of NUP62, NUP54, and the isoform p58 and isoform p45 of NUP58. Interacts with NUTF2. Post-translationally, O-glycosylated.

The protein resides in the nucleus. Its subcellular location is the nuclear pore complex. It is found in the nucleus membrane. In terms of biological role, component of the nuclear pore complex, a complex required for the trafficking across the nuclear membrane. This Homo sapiens (Human) protein is Nucleoporin p54 (NUP54).